The following is a 488-amino-acid chain: Glutamyl-tRNA(Gln) amidotransferase subunit A (488 aa).

Residues lysine 77 and serine 152 each act as charge relay system in the active site. Serine 176 functions as the Acyl-ester intermediate in the catalytic mechanism.

The protein belongs to the amidase family. GatA subfamily. As to quaternary structure, heterotrimer of A, B and C subunits.

The enzyme catalyses L-glutamyl-tRNA(Gln) + L-glutamine + ATP + H2O = L-glutaminyl-tRNA(Gln) + L-glutamate + ADP + phosphate + H(+). Functionally, allows the formation of correctly charged Gln-tRNA(Gln) through the transamidation of misacylated Glu-tRNA(Gln) in organisms which lack glutaminyl-tRNA synthetase. The reaction takes place in the presence of glutamine and ATP through an activated gamma-phospho-Glu-tRNA(Gln). In Streptococcus pneumoniae (strain 70585), this protein is Glutamyl-tRNA(Gln) amidotransferase subunit A.